The primary structure comprises 33 residues: U1-pseudomyrmecitoxin-Pt1 subunit LS1 (33 aa).

This sequence belongs to the myrmexin family. Heterodimer composed of subunit LS1 and subunit SS1 (U1-PSDTX-Pt1b), heterodimer composed of subunit LS1 and SS2 (U1-PSDTX-Pt1b), and heterodimer composed of subunit LS1 and SS3; disulfide-linked. Expressed by the venom gland.

It is found in the secreted. This heterodimer may have anti-inflammatory properties, since the myrmexin complex (composed of 6 SS-LS heterodimers) inhibits carrageenin-induced edema in a dose-dependent manner (after subcutaneous injection into rats). This chain is U1-pseudomyrmecitoxin-Pt1 subunit LS1, found in Pseudomyrmex triplarinus (Ant).